Consider the following 111-residue polypeptide: Kalata-B7 (111 aa).

The N-terminal stretch at 1–28 (MAKFTNCLALCLLLAAVVGAFGVELSEA) is a signal peptide. The propeptide occupies 29-75 (DKSAVVNEIAEKMALQEMLDGVDKLFLRKMKSSETTLTMFLKEMQLK). The cyclopeptide (Gly-Asn) cross-link spans 76–104 (GLPVCGETCTLGTCYTQGCTCSWPICKRN). Disulfide bonds link C80–C94, C84–C96, and C89–C101. Residues 105 to 111 (GLPDVAA) constitute a propeptide that is removed on maturation.

Kalata-B7 is a cyclic peptide.

Functionally, probably participates in a plant defense mechanism. Has hemolytic activity. In Oldenlandia affinis, this protein is Kalata-B7 (OAK3).